Here is a 336-residue protein sequence, read N- to C-terminus: Atypical chemokine receptor 1 (336 aa).

Topologically, residues 1-63 are extracellular; it reads MGNCLHQAEL…CSLLNDSSLP (63 aa). Asparagine 16, asparagine 27, asparagine 33, and asparagine 58 each carry an N-linked (GlcNAc...) asparagine glycan. Cystine bridges form between cysteine 51-cysteine 276 and cysteine 129-cysteine 195. A helical membrane pass occupies residues 64–84; sequence FFILASDLGILASSTVLFMLF. Over 85-95 the chain is Cytoplasmic; sequence RPLFRWQLCPG. Residues 96 to 116 traverse the membrane as a helical segment; that stretch reads WPVLAQLAVGSALFSIVVPIL. Over 117-129 the chain is Extracellular; sequence APGLGNTHSSALC. The helical transmembrane segment at 130 to 153 threads the bilayer; that stretch reads SLGYCVWYGSAFAQALLLGCHASL. Residues 154 to 166 lie on the Cytoplasmic side of the membrane; that stretch reads GPKLGAGQVPGLT. A helical transmembrane segment spans residues 167–187; the sequence is LGLPVGLWGATALLTLPITLA. Topologically, residues 188–207 are extracellular; sequence SGASDGLCTPIYSTELEALQ. Residues 208 to 228 form a helical membrane-spanning segment; sequence ATHAVACFAIFVLLPLGLFGA. At 229–244 the chain is on the cytoplasmic side; it reads KGLKKALGMGPGPWMN. A helical membrane pass occupies residues 245-265; it reads ILWVWFIFWWPHGLVLGLDFL. The Extracellular portion of the chain corresponds to 266 to 287; sequence VGSKLSLLPTCLAQQVLDLLLN. Residues 288–308 traverse the membrane as a helical segment; sequence LAEALAIVHCVATPLLLALFC. At 309–336 the chain is on the cytoplasmic side; that stretch reads HQTTRTLLPSLPLPERWSSPVDTLGSKS.

Belongs to the G-protein coupled receptor 1 family. Atypical chemokine receptor subfamily.

It is found in the early endosome. The protein resides in the recycling endosome. Its subcellular location is the membrane. In terms of biological role, atypical chemokine receptor that controls chemokine levels and localization via high-affinity chemokine binding that is uncoupled from classic ligand-driven signal transduction cascades, resulting instead in chemokine sequestration, degradation, or transcytosis. Also known as interceptor (internalizing receptor) or chemokine-scavenging receptor or chemokine decoy receptor. Has a promiscuous chemokine-binding profile, interacting with inflammatory chemokines of both the CXC and the CC subfamilies but not with homeostatic chemokines. Acts as a receptor for chemokines including CCL2, CCL5, CCL7, CCL11, CCL13, CCL14, CCL17, CXCL5, CXCL6, IL8/CXCL8, CXCL11, GRO, RANTES, MCP-1 and TARC. May regulate chemokine bioavailability and, consequently, leukocyte recruitment through two distinct mechanisms: when expressed in endothelial cells, it sustains the abluminal to luminal transcytosis of tissue-derived chemokines and their subsequent presentation to circulating leukocytes; when expressed in erythrocytes, serves as blood reservoir of cognate chemokines but also as a chemokine sink, buffering potential surges in plasma chemokine levels. In Saimiri boliviensis boliviensis (Bolivian squirrel monkey), this protein is Atypical chemokine receptor 1 (ACKR1).